The following is a 102-amino-acid chain: Small ribosomal subunit protein uS10 (102 aa).

The protein belongs to the universal ribosomal protein uS10 family. Part of the 30S ribosomal subunit.

In terms of biological role, involved in the binding of tRNA to the ribosomes. The chain is Small ribosomal subunit protein uS10 from Methanothrix thermoacetophila (strain DSM 6194 / JCM 14653 / NBRC 101360 / PT) (Methanosaeta thermophila).